The sequence spans 259 residues: Imidazole glycerol phosphate synthase subunit HisF (259 aa).

Residues D11 and D130 contribute to the active site.

Belongs to the HisA/HisF family. Heterodimer of HisH and HisF.

Its subcellular location is the cytoplasm. It catalyses the reaction 5-[(5-phospho-1-deoxy-D-ribulos-1-ylimino)methylamino]-1-(5-phospho-beta-D-ribosyl)imidazole-4-carboxamide + L-glutamine = D-erythro-1-(imidazol-4-yl)glycerol 3-phosphate + 5-amino-1-(5-phospho-beta-D-ribosyl)imidazole-4-carboxamide + L-glutamate + H(+). It functions in the pathway amino-acid biosynthesis; L-histidine biosynthesis; L-histidine from 5-phospho-alpha-D-ribose 1-diphosphate: step 5/9. In terms of biological role, IGPS catalyzes the conversion of PRFAR and glutamine to IGP, AICAR and glutamate. The HisF subunit catalyzes the cyclization activity that produces IGP and AICAR from PRFAR using the ammonia provided by the HisH subunit. This chain is Imidazole glycerol phosphate synthase subunit HisF, found in Lactococcus lactis subsp. cremoris (strain MG1363).